A 378-amino-acid polypeptide reads, in one-letter code: UPF0754 membrane protein BcerKBAB4_0766 (378 aa).

2 helical membrane passes run 1–21 and 357–377; these read MNIW…GGYT and YLGA…LLFL.

Belongs to the UPF0754 family.

The protein resides in the cell membrane. In Bacillus mycoides (strain KBAB4) (Bacillus weihenstephanensis), this protein is UPF0754 membrane protein BcerKBAB4_0766.